A 252-amino-acid chain; its full sequence is Imidazole glycerol phosphate synthase subunit HisF (252 aa).

Residues D11 and D130 contribute to the active site.

It belongs to the HisA/HisF family. In terms of assembly, heterodimer of HisH and HisF.

The protein resides in the cytoplasm. It catalyses the reaction 5-[(5-phospho-1-deoxy-D-ribulos-1-ylimino)methylamino]-1-(5-phospho-beta-D-ribosyl)imidazole-4-carboxamide + L-glutamine = D-erythro-1-(imidazol-4-yl)glycerol 3-phosphate + 5-amino-1-(5-phospho-beta-D-ribosyl)imidazole-4-carboxamide + L-glutamate + H(+). It participates in amino-acid biosynthesis; L-histidine biosynthesis; L-histidine from 5-phospho-alpha-D-ribose 1-diphosphate: step 5/9. Functionally, IGPS catalyzes the conversion of PRFAR and glutamine to IGP, AICAR and glutamate. The HisF subunit catalyzes the cyclization activity that produces IGP and AICAR from PRFAR using the ammonia provided by the HisH subunit. The chain is Imidazole glycerol phosphate synthase subunit HisF from Dictyoglomus thermophilum (strain ATCC 35947 / DSM 3960 / H-6-12).